The primary structure comprises 139 residues: Nuclear receptor 2C2-associated protein (139 aa).

This sequence belongs to the NR2C2AP family. Interacts with NR2C2/TR4. Expressed in all tissues examined, with highest expression in heart, skeletal muscle and pancreas.

Its subcellular location is the nucleus. Functionally, may act as a repressor of NR2C2-mediated transactivation by suppressing the binding between NR2C2/TR4 and the TR4-response element in target genes. The sequence is that of Nuclear receptor 2C2-associated protein (NR2C2AP) from Homo sapiens (Human).